A 206-amino-acid polypeptide reads, in one-letter code: Guanylate kinase (206 aa).

In terms of domain architecture, Guanylate kinase-like spans 5 to 184 (GMLIVLSGPS…AAERIKAIIR (180 aa)). ATP is bound at residue 12-19 (GPSGVGKG).

It belongs to the guanylate kinase family.

It localises to the cytoplasm. The catalysed reaction is GMP + ATP = GDP + ADP. In terms of biological role, essential for recycling GMP and indirectly, cGMP. This is Guanylate kinase from Lactiplantibacillus plantarum (strain ATCC BAA-793 / NCIMB 8826 / WCFS1) (Lactobacillus plantarum).